The primary structure comprises 61 residues: Large ribosomal subunit protein uL29 (61 aa).

The protein belongs to the universal ribosomal protein uL29 family.

The sequence is that of Large ribosomal subunit protein uL29 from Stenotrophomonas maltophilia (strain R551-3).